We begin with the raw amino-acid sequence, 473 residues long: H(+)/Cl(-) exchange transporter ClcA (473 aa).

Topologically, residues 1-32 (MKTDTSTFLAQQIVRLRRRDQIRRLMQRDKTP) are cytoplasmic. A helical transmembrane segment spans residues 33–69 (LAILFMAAVVGTLTGLVGVAFEKAVSWVQNMRIGALV). The Periplasmic portion of the chain corresponds to 70–76 (QVADHAF). The helical transmembrane segment at 77–100 (LLWPLAFILSALLAMVGYFLVRKF) threads the bilayer. Residues 106–110 (GSGIP) carry the Selectivity filter part_1 motif. Residue Ser107 coordinates chloride. An intramembrane region (helical) is located at residues 109–116 (IPEIEGAL). Residues 117–123 (EELRPVR) lie on the Cytoplasmic side of the membrane. A run of 2 helical transmembrane segments spans residues 124 to 141 (WWRV…TLGA) and 148 to 166 (EGPT…LDVF). Residues 146-150 (GREGP) carry the Selectivity filter part_2 motif. Residues 167–176 (RMRSAEARHT) are Cytoplasmic-facing. 2 consecutive intramembrane regions (helical) follow at residues 177-189 (LLAT…LSAA) and 193-201 (PLAGILFII). At 202-214 (EEMRPQFRYNLIS) the chain is on the cytoplasmic side. The helical transmembrane segment at 215–232 (IKAVFTGVIMSSIVFRIF) threads the bilayer. Topologically, residues 233–252 (NGEAPIIEVGKLSDAPVNTL) are periplasmic. A helical transmembrane segment spans residues 253–281 (WLYLILGIIFGCVGPVFNSLVLRTQDMFQ). The Cytoplasmic segment spans residues 282–287 (RFHGGE). The helical transmembrane segment at 288–309 (IKKWVLMGGAIGGLCGILGLIE) threads the bilayer. Over 310 to 329 (PEAAGGGFNLIPIAAAGNFS) the chain is Periplasmic. The next 2 membrane-spanning stretches (helical) occupy residues 330-349 (VGLL…LCFS) and 355-376 (GIFA…MAAA). The Selectivity filter part_3 signature appears at 355–359 (GIFAP). The chloride site is built by Ile356 and Phe357. The Periplasmic portion of the chain corresponds to 377-386 (VLFPQYHLEA). Residues 387–401 (GTFAIAGMGALMAAS) constitute an intramembrane region (helical). Positions 402–404 (VRA) form an intramembrane region, note=Loop between two helices. Residues 405-416 (PLTGIVLVLEMT) constitute an intramembrane region (helical). Positions 417-421 (DNYQL) form an intramembrane region, note=Loop between two helices. A helical transmembrane segment spans residues 422–438 (ILPMIITCLGATLLAQF). At 439–473 (LGGKPLYSTILARTLAKQDAEQAAKNQNAPAGENT) the chain is on the cytoplasmic side. Tyr445 provides a ligand contact to chloride.

Belongs to the chloride channel (TC 2.A.49) family. ClcA subfamily. Homodimer.

It is found in the cell inner membrane. It catalyses the reaction 2 chloride(in) + H(+)(out) = 2 chloride(out) + H(+)(in). Functionally, proton-coupled chloride transporter. Functions as antiport system and exchanges two chloride ions for 1 proton. Probably acts as an electrical shunt for an outwardly-directed proton pump that is linked to amino acid decarboxylation, as part of the extreme acid resistance (XAR) response. This is H(+)/Cl(-) exchange transporter ClcA from Salmonella agona (strain SL483).